Reading from the N-terminus, the 338-residue chain is Adenylosuccinate synthetase (338 aa).

Residues 12-18 (GDEGKGK) and 42-44 (GHT) each bind GTP. The Proton acceptor role is filled by Asp13. Asp13 and Gly42 together coordinate Mg(2+). IMP is bound by residues 13–16 (DEGK), 40–43 (NAGH), Thr127, Arg141, Gln179, Thr194, and Arg256. The active-site Proton donor is His43. Position 252 to 258 (252 to 258 (TVTGRRR)) interacts with substrate. GTP-binding positions include Arg258, 284–286 (CLD), and 324–326 (STG).

This sequence belongs to the adenylosuccinate synthetase family. Homodimer. Mg(2+) is required as a cofactor.

The protein localises to the cytoplasm. The catalysed reaction is IMP + L-aspartate + GTP = N(6)-(1,2-dicarboxyethyl)-AMP + GDP + phosphate + 2 H(+). Its pathway is purine metabolism; AMP biosynthesis via de novo pathway; AMP from IMP: step 1/2. Its function is as follows. Plays an important role in the de novo pathway of purine nucleotide biosynthesis. Catalyzes the first committed step in the biosynthesis of AMP from IMP. This is Adenylosuccinate synthetase from Methanococcus maripaludis (strain DSM 14266 / JCM 13030 / NBRC 101832 / S2 / LL).